Here is a 592-residue protein sequence, read N- to C-terminus: Aspartate--tRNA ligase (592 aa).

Glutamate 171 contributes to the L-aspartate binding site. The interval 195-198 (QLFK) is aspartate. Arginine 217 is a binding site for L-aspartate. ATP-binding positions include 217-219 (RDE) and glutamine 226. Residue histidine 448 participates in L-aspartate binding. Glutamate 482 contributes to the ATP binding site. Arginine 489 contacts L-aspartate. 534 to 537 (GLDR) contacts ATP.

This sequence belongs to the class-II aminoacyl-tRNA synthetase family. Type 1 subfamily. Homodimer.

The protein resides in the cytoplasm. It catalyses the reaction tRNA(Asp) + L-aspartate + ATP = L-aspartyl-tRNA(Asp) + AMP + diphosphate. In terms of biological role, catalyzes the attachment of L-aspartate to tRNA(Asp) in a two-step reaction: L-aspartate is first activated by ATP to form Asp-AMP and then transferred to the acceptor end of tRNA(Asp). This is Aspartate--tRNA ligase from Vibrio campbellii (strain ATCC BAA-1116).